Here is a 411-residue protein sequence, read N- to C-terminus: LL-diaminopimelate aminotransferase (411 aa).

2 residues coordinate substrate: Tyr-15 and Gly-42. Pyridoxal 5'-phosphate is bound by residues Tyr-72, 108 to 109 (SK), Tyr-132, Asn-187, Tyr-218, and 246 to 248 (SFS). The substrate site is built by Lys-109, Tyr-132, and Asn-187. Lys-249 carries the post-translational modification N6-(pyridoxal phosphate)lysine. 2 residues coordinate pyridoxal 5'-phosphate: Arg-257 and Asn-292. Asn-292 and Arg-388 together coordinate substrate.

Belongs to the class-I pyridoxal-phosphate-dependent aminotransferase family. LL-diaminopimelate aminotransferase subfamily. In terms of assembly, homodimer. The cofactor is pyridoxal 5'-phosphate.

It catalyses the reaction (2S,6S)-2,6-diaminopimelate + 2-oxoglutarate = (S)-2,3,4,5-tetrahydrodipicolinate + L-glutamate + H2O + H(+). The protein operates within amino-acid biosynthesis; L-lysine biosynthesis via DAP pathway; LL-2,6-diaminopimelate from (S)-tetrahydrodipicolinate (aminotransferase route): step 1/1. Functionally, involved in the synthesis of meso-diaminopimelate (m-DAP or DL-DAP), required for both lysine and peptidoglycan biosynthesis. Catalyzes the direct conversion of tetrahydrodipicolinate to LL-diaminopimelate. The sequence is that of LL-diaminopimelate aminotransferase from Synechococcus sp. (strain JA-3-3Ab) (Cyanobacteria bacterium Yellowstone A-Prime).